The following is a 329-amino-acid chain: Galactosylgalactosylxylosylprotein 3-beta-glucuronosyltransferase 2 (329 aa).

Residues 1-2 (MK) are Cytoplasmic-facing. A helical; Signal-anchor for type II membrane protein transmembrane segment spans residues 3–23 (SALFSRFFILLPWILIVIIML). Residues 24–329 (DVDTRRPAPP…YRLDTVKIEV (306 aa)) lie on the Lumenal side of the membrane. Residues 45–87 (VGRGGARLPPRRGGPDSGPGRGWEKRNESRPHARPRPEPPLPT) form a disordered region. Residues 66-81 (GWEKRNESRPHARPRP) are compositionally biased toward basic and acidic residues. N-linked (GlcNAc...) asparagine glycosylation occurs at N71. Residues 93-95 (PTY), D124, R161, R166, and 191-193 (DDD) contribute to the UDP-alpha-D-glucuronate site. D193 provides a ligand contact to Mn(2+). Positions 240 to 249 (WRADRPFAID) are interaction with galactose moiety of substrate glycoprotein. Residue E279 is the Proton donor/acceptor of the active site. Residue N298 is glycosylated (N-linked (GlcNAc...) asparagine). 306-308 (HTR) contacts UDP-alpha-D-glucuronate.

Belongs to the glycosyltransferase 43 family. In terms of assembly, homodimer. Mn(2+) is required as a cofactor.

The protein resides in the golgi apparatus membrane. It carries out the reaction 3-O-(beta-D-galactosyl-(1-&gt;3)-beta-D-galactosyl-(1-&gt;4)-beta-D-xylosyl)-L-seryl-[protein] + UDP-alpha-D-glucuronate = 3-O-(beta-D-GlcA-(1-&gt;3)-beta-D-Gal-(1-&gt;3)-beta-D-Gal-(1-&gt;4)-beta-D-Xyl)-L-seryl-[protein] + UDP + H(+). It functions in the pathway protein modification; protein glycosylation. Involved in the biosynthesis of L2/HNK-1 carbohydrate epitope on both glycolipids and glycoproteins. The polypeptide is Galactosylgalactosylxylosylprotein 3-beta-glucuronosyltransferase 2 (B3GAT2) (Canis lupus familiaris (Dog)).